A 368-amino-acid polypeptide reads, in one-letter code: Chaperone protein DnaJ (368 aa).

The J domain maps to 5 to 70 (DYYEVLGVSK…EKRSMYDRMG (66 aa)). A CR-type zinc finger spans residues 132–210 (GVKKTITFTA…CHGSGVADRQ (79 aa)). The Zn(2+) site is built by Cys-145, Cys-148, Cys-162, Cys-165, Cys-184, Cys-187, Cys-198, and Cys-201. CXXCXGXG motif repeat units lie at residues 145-152 (CEVCDGKG), 162-169 (CRTCHGTG), 184-191 (CGTCRGQG), and 198-205 (CQSCHGSG). The interval 349-368 (DGDEHSSSPKKKSFFDRLFD) is disordered. A compositionally biased stretch (basic and acidic residues) spans 350 to 368 (GDEHSSSPKKKSFFDRLFD).

Belongs to the DnaJ family. Homodimer. Zn(2+) serves as cofactor.

The protein localises to the cytoplasm. Its function is as follows. Participates actively in the response to hyperosmotic and heat shock by preventing the aggregation of stress-denatured proteins and by disaggregating proteins, also in an autonomous, DnaK-independent fashion. Unfolded proteins bind initially to DnaJ; upon interaction with the DnaJ-bound protein, DnaK hydrolyzes its bound ATP, resulting in the formation of a stable complex. GrpE releases ADP from DnaK; ATP binding to DnaK triggers the release of the substrate protein, thus completing the reaction cycle. Several rounds of ATP-dependent interactions between DnaJ, DnaK and GrpE are required for fully efficient folding. Also involved, together with DnaK and GrpE, in the DNA replication of plasmids through activation of initiation proteins. The chain is Chaperone protein DnaJ from Acinetobacter baylyi (strain ATCC 33305 / BD413 / ADP1).